A 98-amino-acid polypeptide reads, in one-letter code: Sarcosine oxidase subunit delta (98 aa).

Residues Cys-6, Cys-9, His-59, and Cys-63 each coordinate Zn(2+).

This sequence belongs to the SoxD family. In terms of assembly, heterotetramer composed of subunits alpha (SoxA), beta (SoxB), gamma (SoxG) and delta (SoxD).

The protein localises to the cytoplasm. It catalyses the reaction sarcosine + (6S)-5,6,7,8-tetrahydrofolate + O2 = (6R)-5,10-methylene-5,6,7,8-tetrahydrofolate + glycine + H2O2. It carries out the reaction sarcosine + O2 + H2O = formaldehyde + glycine + H2O2. Its function is as follows. In the presence of tetrahydrofolate, catalyzes the oxidative demethylation of sarcosine to yield glycine, 5,10-methylenetetrahydrofolate and hydrogen peroxide. In the absence of tetrahydrofolate, catalyzes the oxidative demethylation of sarcosine to yield glycine, formaldehyde and hydrogen peroxide. The polypeptide is Sarcosine oxidase subunit delta (Corynebacterium sp. (strain P-1)).